The following is a 147-amino-acid chain: Deoxyuridine 5'-triphosphate nucleotidohydrolase (147 aa).

Substrate-binding positions include arginine 67 to glycine 69, asparagine 80, and threonine 84 to aspartate 86.

It belongs to the dUTPase family. Requires Mg(2+) as cofactor.

The catalysed reaction is dUTP + H2O = dUMP + diphosphate + H(+). Its pathway is pyrimidine metabolism; dUMP biosynthesis; dUMP from dCTP (dUTP route): step 2/2. Its function is as follows. This enzyme is involved in nucleotide metabolism: it produces dUMP, the immediate precursor of thymidine nucleotides and it decreases the intracellular concentration of dUTP so that uracil cannot be incorporated into DNA. In Anaeromyxobacter dehalogenans (strain 2CP-C), this protein is Deoxyuridine 5'-triphosphate nucleotidohydrolase.